We begin with the raw amino-acid sequence, 388 residues long: MFPRFRELYYITHIDNVPSILEKGILSHAEIERQSINCKKVYDNSIVLKRKSRLLADNRSLWEFANLYFQPRNPMLYRLLVQGLKPKDLAIVAVKWTIMKRDDILITDGNAASSETQIYRKSEIKNIKNIISVKDMEYWREEDGSKRKIMAECLVPQCVDPRYISAIYVSDHEVASNLKKAINNRNIPVIPDPTFFFLPNREIKLTQNLSLVEGDMFFSRMQTLTVSVNTVGVMGKGLASRVKYQFPDVYVVFQDACKKKELEFGKPYLYKRESSLDAFLAEDGEKLSDLNHQTWFLLFPTKRHWKNMSEIKGIESGLRWIVENYKKEGIKSLAVPALGCGLGGLEWSIVGPLMCRYLTKLEIPVQIYLPLEKRIPDVQLSPKFLLDS.

Residues 6–197 (RELYYITHID…PVIPDPTFFF (192 aa)) form the DarT domain. NAD(+) is bound by residues 10–12 (YIT) and R50. An NAD(+)-binding element region spans residues 34-52 (QSINCKKVYDNSIVLKRKS). The Proton acceptor role is filled by R50. Residues 107 to 152 (TDGNAASSETQIYRKSEIKNIKNIISVKDMEYWREEDGSKRKIMAE) form an ADP-ribosylating turn-turn loop region. E152 is a catalytic residue. One can recognise a Macro domain in the interval 196–376 (FFLPNREIKL…IYLPLEKRIP (181 aa)). ADP-D-ribose contacts are provided by residues 215–216 (DM), 227–229 (SVN), T301, 339–343 (GCGLG), and 371–372 (LE).

The protein in the N-terminal section; belongs to the DarT ADP-ribosyltransferase family. It in the C-terminal section; belongs to the DarG ADP-ribosyl glycohydrolase family.

It carries out the reaction an N-(ADP-alpha-D-ribosyl)-thymidine in DNA + H2O = a thymidine in DNA + ADP-D-ribose. It catalyses the reaction a thymidine in DNA + NAD(+) = an N-(ADP-alpha-D-ribosyl)-thymidine in DNA + nicotinamide + H(+). A fusion protein of the toxic and antitoxin components of a hybrid type II/IV toxin-antitoxin (TA) system. The N-terminal domain ADP-ribosylates ssDNA on a thymidine residue, while the C-terminal domain removes the modification, neutralizing the toxic effect. This Thermosipho africanus (strain H17ap60334) protein is DNA ADP-ribosyl transferase-DNA ADP-ribosyl glycohydrolase fusion protein.